Here is a 319-residue protein sequence, read N- to C-terminus: Beta-ketoacyl-[acyl-carrier-protein] synthase III (319 aa).

Residues cysteine 115 and histidine 246 contribute to the active site. Residues 247-251 (QANLR) form an ACP-binding region. The active site involves asparagine 276.

Belongs to the thiolase-like superfamily. FabH family. Homodimer.

It is found in the cytoplasm. The catalysed reaction is malonyl-[ACP] + acetyl-CoA + H(+) = 3-oxobutanoyl-[ACP] + CO2 + CoA. The protein operates within lipid metabolism; fatty acid biosynthesis. Functionally, catalyzes the condensation reaction of fatty acid synthesis by the addition to an acyl acceptor of two carbons from malonyl-ACP. Catalyzes the first condensation reaction which initiates fatty acid synthesis and may therefore play a role in governing the total rate of fatty acid production. Possesses both acetoacetyl-ACP synthase and acetyl transacylase activities. Its substrate specificity determines the biosynthesis of branched-chain and/or straight-chain of fatty acids. This is Beta-ketoacyl-[acyl-carrier-protein] synthase III from Coxiella burnetii (strain CbuK_Q154) (Coxiella burnetii (strain Q154)).